The primary structure comprises 967 residues: Serine/threonine-protein kinase/endoribonuclease ire-1 (967 aa).

A signal peptide spans 1–21 (MRATFHLFTFIFLLLFSSVIC). The Lumenal portion of the chain corresponds to 22–438 (ISTPGFRNDH…LLLLNNHPIP (417 aa)). N-linked (GlcNAc...) asparagine glycans are attached at residues Asn100 and Asn188. The chain crosses the membrane as a helical span at residues 439–455 (FYATLVTMFALLLTVIW). Residues 456 to 967 (QCGRQWDQQK…IKKKSNPNTD (512 aa)) lie on the Cytoplasmic side of the membrane. The interval 474–494 (EIVNNPGESRSAQTSKQSNRG) is disordered. A compositionally biased stretch (polar residues) spans 479-494 (PGESRSAQTSKQSNRG). One can recognise a Protein kinase domain in the interval 518–778 (YSPSDILGTG…ADAVLNHPFF (261 aa)). ATP-binding positions include 524–532 (LGTGCEGTV) and Lys546. The active-site Proton acceptor is the Asp636. Ser672 bears the Phosphoserine; by autocatalysis mark. The KEN domain occupies 781 to 909 (SEKRLAYFSD…EAVFKRYYSD (129 aa)). Residues 948-967 (RTPLKLDKRNIKKKSNPNTD) form a disordered region. Over residues 957–967 (NIKKKSNPNTD) the composition is skewed to basic residues.

This sequence belongs to the protein kinase superfamily. Ser/Thr protein kinase family. Requires Mg(2+) as cofactor. In terms of processing, autophosphorylated mainly on serine residues.

The protein localises to the endoplasmic reticulum membrane. It catalyses the reaction L-seryl-[protein] + ATP = O-phospho-L-seryl-[protein] + ADP + H(+). The enzyme catalyses L-threonyl-[protein] + ATP = O-phospho-L-threonyl-[protein] + ADP + H(+). The kinase domain is activated by trans-autophosphorylation. Kinase activity is required for activation of the endoribonuclease domain. Senses unfolded proteins in the lumen of the endoplasmic reticulum via its N-terminal domain which leads to enzyme auto-activation. The active endoribonuclease domain splices xbp-1 precursor mRNA to produce the mature form which then induces transcription of UPR target genes. Unfolded protein response (UPR) transcriptional activation by ire-1, as well as translational attenuation by pek-1 in a complementary pathway, maintains ER homeostasis. Regulates the transcriptional up-regulation of nucleoside-diphosphatase apy-1 and many other genes, upon ER stress. By activating the UPR pathway during non-lethal hypoxia pre-conditioning, confers adaptive protection to subsequent exposure to hypoxia. ire-1 and pek-1 are redundant genes that control a pathway essential for larval development and survival. Plays a role in the nuclear retention of unspliced mRNAs. The protein is Serine/threonine-protein kinase/endoribonuclease ire-1 of Caenorhabditis elegans.